Reading from the N-terminus, the 292-residue chain is Putative OX-2 membrane glycoprotein homolog (292 aa).

Positions 1 to 18 are cleaved as a signal peptide; it reads MSPLMLRLLPLLCIIISA. The Ig-like V-type domain occupies 24 to 136; that stretch reads PETSPSLVYE…TFTVDNEKTS (113 aa). Cysteine 42 and cysteine 126 are joined by a disulfide. Residues asparagine 45, asparagine 57, asparagine 72, and asparagine 195 are each glycosylated (N-linked (GlcNAc...) asparagine; by host). The 91-residue stretch at 147–237 folds into the Ig-like C2-type domain; sequence PIVVLYFRYL…TNQKASALVT (91 aa). A helical membrane pass occupies residues 263 to 283; it reads VFTWIVPLILILIISVMVLLI.

It is found in the host membrane. The chain is Putative OX-2 membrane glycoprotein homolog (U85) from Human herpesvirus 6B (strain Z29) (HHV-6 variant B).